The following is a 327-amino-acid chain: Zinc transport protein ZntB (327 aa).

Residues 1–271 (MESFAGKELQ…AMNRRTYTMS (271 aa)) are Cytoplasmic-facing. Residues 272–292 (LLAMVFLPTTFLTGLFGVNLG) form a helical membrane-spanning segment. Over 293 to 300 (GIPGGDAP) the chain is Periplasmic. Residues 301 to 321 (FGFFTFCLMLVILVGGVAWWL) traverse the membrane as a helical segment. The Cytoplasmic segment spans residues 322-327 (KRSKWL).

Belongs to the CorA metal ion transporter (MIT) (TC 1.A.35) family.

Its subcellular location is the cell inner membrane. It catalyses the reaction Zn(2+)(out) + H(+)(out) = Zn(2+)(in) + H(+)(in). Functionally, zinc transporter. Acts as a Zn(2+):proton symporter, which likely mediates zinc ion uptake. The protein is Zinc transport protein ZntB of Pectobacterium atrosepticum (strain SCRI 1043 / ATCC BAA-672) (Erwinia carotovora subsp. atroseptica).